Reading from the N-terminus, the 312-residue chain is MANRTVKDAHSIHGTNPQYLVEKIIRTRIYESKYWKEECFGLTAELVVDKAMELRFVGGVYGGNIKPTPFLCLTLKMLQIQPEKDIIVEFIKNEDFKYVRMLGALYMRLTGTAIDCYKYLEPLYNDYRKIKSQNRNGEFELMHVDEFIDELLHSERVCDIILPRLQKRYVLEEAEQLEPRVSALEEDMDDVESSEEEEEEDEKLERVPSPDHRRRSYRDLDKPRRSPTLRYRRSRSRSPRRRSRSPKRRSPSPRRERHRSKSPRRHRSRSRDRRHRSRSKSPGHHRSHRHRSHSKSPERSKKSHKKSRRGNE.

Residues 1 to 179 form an N-terminal protein interaction domain region; that stretch reads MANRTVKDAH…VLEEAEQLEP (179 aa). Residues Ser11, Ser193, Ser194, Ser209, and Ser226 each carry the phosphoserine modification. Residues 170–204 are a coiled coil; sequence VLEEAEQLEPRVSALEEDMDDVESSEEEEEEDEKL. Residues 181-312 are disordered; the sequence is VSALEEDMDD…SHKKSRRGNE (132 aa). A compositionally biased stretch (acidic residues) spans 184–202; the sequence is LEEDMDDVESSEEEEEEDE. Residues 203 to 224 are compositionally biased toward basic and acidic residues; it reads KLERVPSPDHRRRSYRDLDKPR. Basic residues-rich tracts occupy residues 225–294 and 301–312; these read RSPT…RSHS and KKSHKKSRRGNE.

It belongs to the PRP38 family. Component of the spliceosome B complex. Interacts (via N-terminal interaction domain) with ZMAT2 and MFAP1.

The protein localises to the nucleus. Its function is as follows. Involved in pre-mRNA splicing as a component of the spliceosome. The chain is Pre-mRNA-splicing factor 38A (PRPF38A) from Bos taurus (Bovine).